A 283-amino-acid polypeptide reads, in one-letter code: Elongation factor Ts (283 aa).

The segment at 79-82 is involved in Mg(2+) ion dislocation from EF-Tu; sequence TDFV.

The protein belongs to the EF-Ts family.

The protein localises to the cytoplasm. In terms of biological role, associates with the EF-Tu.GDP complex and induces the exchange of GDP to GTP. It remains bound to the aminoacyl-tRNA.EF-Tu.GTP complex up to the GTP hydrolysis stage on the ribosome. This Shewanella sp. (strain ANA-3) protein is Elongation factor Ts.